Reading from the N-terminus, the 262-residue chain is MRIDVITIFPDYLNPLREALLGKAIQRERIAVGVHDLRNWTHDVHRAVDDSPYGGGPGMVMKPDVWGEALDEICGDGTGQVPRLVVPTPAGRPFTQRTAVRWSQEPWLVFACGRYEGIDQRVITDAARRMPVEEVSIGDYVLVGGEVAALTMIEAVVRLLPGVLGNPASAEQDSFSDGLLEGPCYTRPEVWRDQPVPEVLRSGNHAAIARWRRDQSLERTWRRRPELIEALPEGTLDARDREVLDRVRESDHSGDSRSPGSG.

S-adenosyl-L-methionine is bound by residues G113 and 137–142 (IGDYVL).

It belongs to the RNA methyltransferase TrmD family. In terms of assembly, homodimer.

Its subcellular location is the cytoplasm. It carries out the reaction guanosine(37) in tRNA + S-adenosyl-L-methionine = N(1)-methylguanosine(37) in tRNA + S-adenosyl-L-homocysteine + H(+). Its function is as follows. Specifically methylates guanosine-37 in various tRNAs. This Saccharopolyspora erythraea (strain ATCC 11635 / DSM 40517 / JCM 4748 / NBRC 13426 / NCIMB 8594 / NRRL 2338) protein is tRNA (guanine-N(1)-)-methyltransferase.